The following is a 236-amino-acid chain: GCN5-related N-acetyltransferase 8 (236 aa).

The N-acetyltransferase domain occupies 96–235; that stretch reads ATITSSPSPD…DALEAFDQVN (140 aa). Acetyl-CoA-binding positions include 161–163, 169–174, 200–202, and Tyr207; these read IFV, RKGFGS, and NVN. Catalysis depends on Tyr207, which acts as the Proton donor.

Belongs to the acetyltransferase family. GNAT subfamily. As to quaternary structure, oligomer. Expressed throughout the plant.

The protein resides in the cytoplasm. It is found in the nucleus. The catalysed reaction is an N-terminal L-alpha-aminoacyl-[protein] + acetyl-CoA = N-terminal N(alpha)-acetyl-L-alpha-aminoacyl-[protein] + CoA + H(+). It carries out the reaction L-lysyl-[protein] + acetyl-CoA = N(6)-acetyl-L-lysyl-[protein] + CoA + H(+). Probable protein acetyltransferase with dual specificity triggering both N-alpha-acetylation (NTA) and epsilon-lysine acetylation (KA). The protein is GCN5-related N-acetyltransferase 8 of Arabidopsis thaliana (Mouse-ear cress).